The sequence spans 290 residues: MPQTRLFFRSNGAPAREAFSRLEAAFEEDGLPLAIRELDEERDIHEVSIYASEDWEGVADRMRSCLTSIAGLSEIETEELPEIDWVAHSLAGLKAVRAGRFFVHGSHERGQHRAGEIPIEIEASLAFGTGHHGTTSGCLEMISRVVPREHPRNALDLGTGSAVLAIAIARLAHIPVLATDIDPVAVRVARENVRLNRAAEWVETAAAPGFHHPAFARRMPFDLIVANILARPLIGLAPAMARHLSPGGSLILSGILTHQRRQVIAGYVGQGFRHLTTLHREEWVTIHMKR.

Positions 135, 158, 180, and 227 each coordinate S-adenosyl-L-methionine.

The protein belongs to the methyltransferase superfamily. PrmA family.

The protein resides in the cytoplasm. The enzyme catalyses L-lysyl-[protein] + 3 S-adenosyl-L-methionine = N(6),N(6),N(6)-trimethyl-L-lysyl-[protein] + 3 S-adenosyl-L-homocysteine + 3 H(+). Its function is as follows. Methylates ribosomal protein L11. The chain is Ribosomal protein L11 methyltransferase from Chelativorans sp. (strain BNC1).